A 421-amino-acid chain; its full sequence is Ameloblastin (421 aa).

A signal peptide spans 1–26; it reads MPALKIPLFKMKDMVLILCLLKMSSA. Position 37 is a hydroxyproline (Pro-37). At Ser-43 the chain carries Phosphoserine. Disordered stretches follow at residues 104-126, 264-311, and 333-421; these read PVHPPPLPSQPSLQPQQPGQKPF, GGMP…ADPE, and GKIP…FQEP. Ser-112 carries O-linked (GalNAc...) serine glycosylation. Residues 113 to 125 are compositionally biased toward low complexity; the sequence is QPSLQPQQPGQKP. A compositionally biased stretch (low complexity) spans 339–350; the sequence is ARGPAGRSRGPP. Polar residues predominate over residues 388 to 410; sequence MDSTATPYSEHTSMPGNKAQQPQ. Basic and acidic residues predominate over residues 411–421; sequence IKRDAWRFQEP.

It belongs to the ameloblastin family. Ameloblast-specific. Located at the Tomes processes of secretory ameloblasts and in the sheath space between rod-interrod enamel.

It is found in the secreted. Its subcellular location is the extracellular space. It localises to the extracellular matrix. Involved in the mineralization and structural organization of enamel. In Sus scrofa (Pig), this protein is Ameloblastin (AMBN).